The following is a 683-amino-acid chain: Methionine--tRNA ligase (683 aa).

Positions 14–24 (PYANGSIHLGH) match the 'HIGH' region motif. 4 residues coordinate Zn(2+): cysteine 145, cysteine 148, cysteine 158, and cysteine 161. The 'KMSKS' region motif lies at 331-335 (KMSKS). Position 334 (lysine 334) interacts with ATP. Residues 545-572 (ASKEDLTASQTDTGAAAPAGNGELAKDP) are disordered. Positions 581–683 (TFAAVDLRVA…SGAKPGQRIK (103 aa)) constitute a tRNA-binding domain.

The protein belongs to the class-I aminoacyl-tRNA synthetase family. MetG type 1 subfamily. In terms of assembly, homodimer. The cofactor is Zn(2+).

It localises to the cytoplasm. The catalysed reaction is tRNA(Met) + L-methionine + ATP = L-methionyl-tRNA(Met) + AMP + diphosphate. Its function is as follows. Is required not only for elongation of protein synthesis but also for the initiation of all mRNA translation through initiator tRNA(fMet) aminoacylation. This chain is Methionine--tRNA ligase, found in Pseudomonas fluorescens (strain Pf0-1).